The chain runs to 328 residues: D-cysteine desulfhydrase (328 aa).

Lys-51 bears the N6-(pyridoxal phosphate)lysine mark.

The protein belongs to the ACC deaminase/D-cysteine desulfhydrase family. Homodimer. The cofactor is pyridoxal 5'-phosphate.

The enzyme catalyses D-cysteine + H2O = hydrogen sulfide + pyruvate + NH4(+) + H(+). In terms of biological role, catalyzes the alpha,beta-elimination reaction of D-cysteine and of several D-cysteine derivatives. It could be a defense mechanism against D-cysteine. The polypeptide is D-cysteine desulfhydrase (Salmonella agona (strain SL483)).